The primary structure comprises 177 residues: Basic form of pathogenesis-related protein 1 (177 aa).

Positions 1–23 are cleaved as a signal peptide; that stretch reads MGFLTTIVACFITFAILIHSSKA. Glutamine 24 bears the Pyrrolidone carboxylic acid mark. An SCP domain is found at 31 to 147; sequence LNPHNAARRQ…NGWFFITCNY (117 aa).

It belongs to the CRISP family. Two disulfide bonds are present.

Probably involved in the defense reaction of plants against pathogens. This is Basic form of pathogenesis-related protein 1 from Nicotiana tabacum (Common tobacco).